A 313-amino-acid polypeptide reads, in one-letter code: MKLLMLCREPRLYSCQRLKEAAENSGHQMDILDPNRCLLKLSENSPHFELIYQATMEHEPSRLLNYDAVIPRFGSQSTKMGCAVLRHFEAQNIPCLNSATAFLQARDKWQSLQMLMAQGIAIPHSLLAGPEFQAPSTMQYVQSPTILKTLSGAQGIGVILAEKRQSAVSILETLKQADVSVLAQEFIEEANGADLRCFVIGERVVASMQRISQNGEFRANFHRGGLAEKVSLSEAEKTMAVKATKALGLDVAGVDLIRAKRGTLVLEVNASPGLEMIEKTSGIDIALQMIVHLEKKYQALQNVTKTIELRSHK.

Residues 112 to 294 (LQMLMAQGIA…IALQMIVHLE (183 aa)) enclose the ATP-grasp domain. Residues K148, 185–186 (EF), D194, and 218–220 (RAN) contribute to the ATP site. Residues D255, E267, and N269 each contribute to the Mg(2+) site. Residues D255, E267, and N269 each coordinate Mn(2+).

It belongs to the RimK family. It depends on Mg(2+) as a cofactor. Requires Mn(2+) as cofactor.

In Pasteurella multocida (strain Pm70), this protein is Probable alpha-L-glutamate ligase.